Here is a 167-residue protein sequence, read N- to C-terminus: Cell division protein SepF (167 aa).

A disordered region spans residues 25-64; it reads EEDVAPVNNSTFQEKKHKKRSAVQRKQKNSDQEGDSVVPL. Residues 39 to 51 are compositionally biased toward basic residues; the sequence is KKHKKRSAVQRKQ.

Belongs to the SepF family. As to quaternary structure, homodimer. Interacts with FtsZ.

It localises to the cytoplasm. Functionally, cell division protein that is part of the divisome complex and is recruited early to the Z-ring. Probably stimulates Z-ring formation, perhaps through the cross-linking of FtsZ protofilaments. Its function overlaps with FtsA. This Natranaerobius thermophilus (strain ATCC BAA-1301 / DSM 18059 / JW/NM-WN-LF) protein is Cell division protein SepF.